The chain runs to 244 residues: Sugar fermentation stimulation protein homolog (244 aa).

The protein belongs to the SfsA family.

The protein is Sugar fermentation stimulation protein homolog of Dinoroseobacter shibae (strain DSM 16493 / NCIMB 14021 / DFL 12).